The primary structure comprises 120 residues: uncharacterized protein (120 aa).

A helical transmembrane segment spans residues 63-83 (IDMSCVICFNFSCHLFVVIFI).

Its subcellular location is the membrane. This is an uncharacterized protein from Saccharomyces cerevisiae (strain ATCC 204508 / S288c) (Baker's yeast).